The following is a 207-amino-acid chain: Large ribosomal subunit protein bL17m (207 aa).

Positions 173–200 (EKESEHARLKEDHEDEKTVKKDWKRGDP) are enriched in basic and acidic residues. A disordered region spans residues 173 to 207 (EKESEHARLKEDHEDEKTVKKDWKRGDPIPRPTYI).

It belongs to the bacterial ribosomal protein bL17 family. Component of the mitochondrial large ribosomal subunit (mt-LSU). Mature yeast 74S mitochondrial ribosomes consist of a small (37S) and a large (54S) subunit. The 37S small subunit contains a 15S ribosomal RNA (15S mt-rRNA) and at least 32 different proteins. The 54S large subunit contains a 21S rRNA (21S mt-rRNA) and at least 45 different proteins.

Its subcellular location is the mitochondrion. Its function is as follows. Component of the mitochondrial ribosome (mitoribosome), a dedicated translation machinery responsible for the synthesis of mitochondrial genome-encoded proteins, including at least some of the essential transmembrane subunits of the mitochondrial respiratory chain. The mitoribosomes are attached to the mitochondrial inner membrane and translation products are cotranslationally integrated into the membrane. This is Large ribosomal subunit protein bL17m (mrpl8) from Schizosaccharomyces pombe (strain 972 / ATCC 24843) (Fission yeast).